Consider the following 555-residue polypeptide: Solute carrier family 22 member 2 (555 aa).

Topologically, residues 1-21 are cytoplasmic; it reads MSTVDDILEHIGEFHLFQKQT. A helical membrane pass occupies residues 22–42; that stretch reads FFLLALLSGAFTPIYVGIVFL. Topologically, residues 43–150 are extracellular; sequence GFTPDHHCWS…LVCAHSWMLD (108 aa). The N-linked (GlcNAc...) asparagine glycan is linked to asparagine 71. The helical transmembrane segment at 151 to 171 threads the bilayer; the sequence is LFQSVVNVGFFIGAMMIGYLA. The Cytoplasmic segment spans residues 172–177; the sequence is DRFGRK. A helical transmembrane segment spans residues 178–198; it reads FCLLVTILINAISGALMAISP. At 199-210 the chain is on the extracellular side; it reads NYAWMLVFRFLQ. Residues 211 to 231 traverse the membrane as a helical segment; it reads GLVSKAGWLIGYILITEFVGL. Residues 232-238 lie on the Cytoplasmic side of the membrane; that stretch reads GYRRMVG. Residues 239 to 259 traverse the membrane as a helical segment; sequence ICYQIAFTVGLLILAGVAYVI. Topologically, residues 260–263 are extracellular; it reads PNWR. A helical membrane pass occupies residues 264–284; the sequence is WLQFAVTLPNFCFLLYFWCIP. The short motif at 284-288 is the Proline-rich sequence element; the sequence is PESPR. Over 285–348 the chain is Cytoplasmic; sequence ESPRWLISQN…VRTPQIRKHT (64 aa). The chain crosses the membrane as a helical span at residues 349-369; sequence LILMYNWFTSSVLYQGLIMHM. Over 370–375 the chain is Extracellular; the sequence is GLAGDN. The chain crosses the membrane as a helical span at residues 376-396; it reads IYLDFFYSALVEFPAAFIIIL. Residues 397–404 lie on the Cytoplasmic side of the membrane; that stretch reads TIDRVGRR. Residues 405–425 form a helical membrane-spanning segment; the sequence is YPWAVSNMVAGAACLASVFIP. The Extracellular segment spans residues 426 to 432; sequence DDLQWLK. Residues 433–453 traverse the membrane as a helical segment; it reads ITIACLGRMGITMAYEMVCLV. Over 454 to 464 the chain is Cytoplasmic; that stretch reads NAELYPTYIRN. The chain crosses the membrane as a helical span at residues 465-485; it reads LGVLVCSSMCDIGGIITPFLV. Over 486 to 494 the chain is Extracellular; it reads YRLTDIWME. Residues 495 to 515 form a helical membrane-spanning segment; the sequence is FPLVVFAVVGLVAGALVLLLP. The Cytoplasmic portion of the chain corresponds to 516–555; it reads ETKGKALPETIEDAENMQRPRKKKEKRIYLQVKQADRPLS.

The protein belongs to the major facilitator (TC 2.A.1) superfamily. Organic cation transporter (TC 2.A.1.19) family. Tyrosine phosphorylated. Expressed in the kidney, in the proximal tubules of cortex and of the outer medulla. In brain, highly expressed predominantly in regions located at the brain-cerebrospinal fluid border, in the leptomeninges, in the choroid plexus and in a layer boarding the third ventricle. In brain, also observed in the granular cell layer of the cerebellum and in the granular layer and pyramidal cells of the hippocampus in the CA1-CA3 regions. Expressed in tracheal and bronchial ciliated epithelium in the respiratory tract. Expression is greater in the kidney of male than of female.

Its subcellular location is the basolateral cell membrane. It localises to the basal cell membrane. It is found in the apical cell membrane. It catalyses the reaction (R)-noradrenaline(out) = (R)-noradrenaline(in). The enzyme catalyses (R)-adrenaline(out) = (R)-adrenaline(in). The catalysed reaction is serotonin(out) = serotonin(in). It carries out the reaction dopamine(out) = dopamine(in). It catalyses the reaction histamine(out) = histamine(in). The enzyme catalyses thiamine(in) = thiamine(out). The catalysed reaction is creatinine(in) = creatinine(out). It carries out the reaction 1-methylnicotinamide(out) = 1-methylnicotinamide(in). It catalyses the reaction guanidine(out) = guanidine(in). The enzyme catalyses choline(out) = choline(in). The catalysed reaction is agmatine(out) = agmatine(in). It carries out the reaction putrescine(out) = putrescine(in). It catalyses the reaction spermidine(in) = spermidine(out). The enzyme catalyses tyramine(in) = tyramine(out). The catalysed reaction is L-histidyl-L-proline diketopiperazine(in) = L-histidyl-L-proline diketopiperazine(out). It carries out the reaction (R)-salsolinol(in) = (R)-salsolinol(out). It catalyses the reaction N-methyl-(R)-salsolinol(in) = N-methyl-(R)-salsolinol(out). The enzyme catalyses acetylcholine(in) = acetylcholine(out). The catalysed reaction is prostaglandin F2alpha(out) = prostaglandin F2alpha(in). It carries out the reaction prostaglandin E2(out) = prostaglandin E2(in). Its activity is regulated as follows. Tyrosine phosphorylation of the transporter leads to activation of the transport activity. Inhibited by cGMP, most likely through a cGMP-binding protein that interacts with OCT2. Electrogenic voltage-dependent transporter that mediates the transport of a variety of organic cations such as endogenous bioactive amines, cationic drugs and xenobiotics. Functions as a Na(+)-independent, bidirectional uniporter. Cation cellular uptake or release is driven by the electrochemical potential, i.e. membrane potential and concentration gradient. However, may also engage electroneutral cation exchange when saturating concentrations of cation substrates are reached. Predominantly expressed at the basolateral membrane of hepatocytes and proximal tubules and involved in the uptake and disposition of cationic compounds by hepatic and renal clearance from the blood flow. Implicated in monoamine neurotransmitters uptake such as histamine, dopamine, adrenaline/epinephrine, noradrenaline/norepinephrine, serotonin and tyramine, thereby supporting a physiological role in the central nervous system by regulating interstitial concentrations of neurotransmitters. Also capable of transporting dopaminergic neuromodulators cyclo(his-pro), salsolinol and N-methyl-salsolinol, thereby involved in the maintenance of dopaminergic cell integrity in the central nervous system. Mediates the bidirectional transport of acetylcholine (ACh) at the apical membrane of ciliated cell in airway epithelium, thereby playing a role in luminal release of ACh from bronchial epithelium. Also transports guanidine and endogenous monoamines such as vitamin B1/thiamine, creatinine and N-1-methylnicotinamide (NMN). Mediates the uptake and efflux of quaternary ammonium compound choline. Mediates the bidirectional transport of polyamine agmatine and the uptake of polyamine putrescine. Able to transport non-amine endogenous compounds such as prostaglandin E2 (PGE2) and prostaglandin F2-alpha (PGF2-alpha). Also involved in the uptake of xenobiotic 4-(4-(dimethylamino)styryl)-N-methylpyridinium (ASP). May contribute to regulate the transport of organic compounds in testis across the blood-testis-barrier. This Rattus norvegicus (Rat) protein is Solute carrier family 22 member 2.